Reading from the N-terminus, the 100-residue chain is Putative septation protein SpoVG (100 aa).

This sequence belongs to the SpoVG family.

In terms of biological role, could be involved in septation. This chain is Putative septation protein SpoVG, found in Staphylococcus haemolyticus (strain JCSC1435).